We begin with the raw amino-acid sequence, 585 residues long: BURP domain-containing protein 17 (585 aa).

The first 20 residues, 1 to 20 (MDRIFARFFCFLLIAAVSHA), serve as a signal peptide directing secretion. Residues 63 to 82 (GQRNYKSSVSHVAERSHRVD) are disordered. The 222-residue stretch at 363–584 (FFLEKNLQQG…QPDAVVWTRR (222 aa)) folds into the BURP domain.

In terms of tissue distribution, expressed in leaves.

The polypeptide is BURP domain-containing protein 17 (BURP17) (Oryza sativa subsp. japonica (Rice)).